The chain runs to 181 residues: ATP-dependent protease subunit HslV (181 aa).

The active site involves Thr-7. Na(+)-binding residues include Gly-166, Cys-169, and Thr-172.

This sequence belongs to the peptidase T1B family. HslV subfamily. A double ring-shaped homohexamer of HslV is capped on each side by a ring-shaped HslU homohexamer. The assembly of the HslU/HslV complex is dependent on binding of ATP.

The protein localises to the cytoplasm. The enzyme catalyses ATP-dependent cleavage of peptide bonds with broad specificity.. Its activity is regulated as follows. Allosterically activated by HslU binding. In terms of biological role, protease subunit of a proteasome-like degradation complex believed to be a general protein degrading machinery. This Delftia acidovorans (strain DSM 14801 / SPH-1) protein is ATP-dependent protease subunit HslV.